We begin with the raw amino-acid sequence, 456 residues long: Frizzled/smoothened-like sans CRD protein F (456 aa).

The signal sequence occupies residues 1 to 30 (MIFNNLKNQNKIINFLIIFYFLSFLKQIES). The Extracellular segment spans residues 31-92 (QSINITSSSS…PFFTINEWNK (62 aa)). 3 N-linked (GlcNAc...) asparagine glycosylation sites follow: Asn34, Asn52, and Asn70. The helical transmembrane segment at 93–113 (FLNMSLVMGTISFFSGLFLLV) threads the bilayer. The Cytoplasmic segment spans residues 114–127 (TYSPIVNKTHNRHT). A helical membrane pass occupies residues 128–148 (IGVMCMSFGVCLAMCSDMWNF). Residues 149–174 (GSNFTEKSICPSPGQYLSTSNARCLS) lie on the Extracellular side of the membrane. Asn151 is a glycosylation site (N-linked (GlcNAc...) asparagine). The helical transmembrane segment at 175-195 (SGIFLQFGGVFGFLNWTLLSF) threads the bilayer. Residues 196–211 (DLFMNIKGIITKNYDK) are Cytoplasmic-facing. Residues 212-232 (YYVSGTFIIAIIFTFVPIVND) traverse the membrane as a helical segment. Topologically, residues 233 to 252 (QYSMSYIGLGCWLGSAMYQL) are extracellular. Residues 253–273 (IFFWILLSICLIVSSVFIILI) form a helical membrane-spanning segment. Over 274-297 (LKEVYIIIKLSKQKTSLKGNIRPL) the chain is Cytoplasmic. A helical transmembrane segment spans residues 298 to 318 (ICISITGFAFFYMFFYYISIV). Residues 319 to 354 (VEGDYYERVLNEYTDCLMDPTKDISECKSPRMSVAS) are Extracellular-facing. The chain crosses the membrane as a helical span at residues 355–375 (EFVFLLCLRLLGIGAFIFYGI). The Cytoplasmic segment spans residues 376 to 456 (NNKVKKIWLN…ESSLNSVDEI (81 aa)). The interval 403-422 (ADNDKSNSNGSKVLYRTNNT) is disordered.

It belongs to the G-protein coupled receptor Fz/Smo family.

It localises to the membrane. This chain is Frizzled/smoothened-like sans CRD protein F (fscF), found in Dictyostelium discoideum (Social amoeba).